Reading from the N-terminus, the 143-residue chain is Transcriptional regulator MraZ (143 aa).

SpoVT-AbrB domains follow at residues 5-47 (EYNH…SMDE) and 76-119 (ATEC…SSDQ).

Belongs to the MraZ family. In terms of assembly, forms oligomers.

It localises to the cytoplasm. The protein localises to the nucleoid. This chain is Transcriptional regulator MraZ, found in Alkaliphilus metalliredigens (strain QYMF).